Consider the following 269-residue polypeptide: Aquaporin-7 (269 aa).

Over 1 to 20 (MAGSVLENIQSVLQKTWVRE) the chain is Cytoplasmic. The residue at position 4 (serine 4) is a Phosphoserine. Residues 21 to 38 (FLAEFLSTYVLMVFGLGS) traverse the membrane as a helical segment. The Extracellular segment spans residues 39–51 (VAHMVLGERLGSY). Residues 52–69 (LGVNLGFGFGVTMGIHVA) traverse the membrane as a helical segment. The Cytoplasmic segment spans residues 70–73 (GGIS). Positions 74–87 (GAHMNAAVTFTNCA) form an intramembrane region, discontinuously helical. An NPA 1 motif is present at residues 78-80 (NAA). At 88–95 (LGRMAWKK) the chain is on the cytoplasmic side. Residues 96–116 (FPIYVLGQFLGSFLAAATTYL) form a helical membrane-spanning segment. The Extracellular segment spans residues 117–151 (IFYGAINHYAGGELLVTGPKSTANIFATYLPEHMT). A helical transmembrane segment spans residues 152–172 (LWRGFVDEVFVTGMLQLCIFA). The Cytoplasmic portion of the chain corresponds to 173–184 (ITDKLNSPALQG). Residues 185-201 (TEPLMIGILVCVLGVSL) form a helical membrane-spanning segment. The Extracellular segment spans residues 202 to 205 (GMNT). The segment at residues 206-219 (GYAINPSRDLPPRF) is an intramembrane region (discontinuously helical). The NPA 2 motif lies at 210 to 212 (NPS). At 220–237 (FTFIAGWGKKVFSAGNNW) the chain is on the extracellular side. A helical transmembrane segment spans residues 238 to 259 (WWVPVVAPLLGAYLGGIVYLGL). Over 260-269 (IHAGIPPQGS) the chain is Cytoplasmic.

This sequence belongs to the MIP/aquaporin (TC 1.A.8) family. Homotetramer; each monomer provides an independent glycerol/water pore. Two homotetramers on opposing membranes can dimerize, forming a cell-cell junction. Interacts with PLIN1. Post-translationally, phosphorylation by PKA could prevent the interaction with PLIN1. Detected in heart, kidney and testis.

It localises to the cell membrane. The protein localises to the cytoplasmic vesicle membrane. The protein resides in the lipid droplet. The catalysed reaction is glycerol(in) = glycerol(out). It catalyses the reaction H2O(in) = H2O(out). It carries out the reaction urea(in) = urea(out). With respect to regulation, glycerol transport is regulated by pH, with the porin being permeable to glycerol at pH 7.4 but not at pH 5.5. Water permeability, however, is not influenced by pH. Not inhibited by mercury ions. Its function is as follows. Aquaglyceroporins form homotetrameric transmembrane channels, with each monomer independently mediating glycerol and water transport across the plasma membrane along their osmotic gradient. Could also be permeable to urea. Mediates the efflux of glycerol, formed upon triglyceride hydrolysis, to avoid its accumulation in adipocytes and to make it available to other tissues. In the kidney, mediates the reabsorption of glycerol, preventing its loss in urine, again participating to energy homeostasis. In pancreatic beta cells, it also mediates the efflux of glycerol, regulating its intracellular levels. The polypeptide is Aquaporin-7 (Rattus norvegicus (Rat)).